We begin with the raw amino-acid sequence, 519 residues long: AarF domain-containing protein kinase 1 (519 aa).

The region spanning 145–481 (SFEDTPLGAA…SLYRRVHISL (337 aa)) is the Protein kinase domain. Residues 151-159 (LGAASLAQV) and Lys-173 contribute to the ATP site. The active-site Proton acceptor is Asp-305.

It belongs to the protein kinase superfamily. ADCK protein kinase family.

The protein localises to the mitochondrion. In terms of biological role, appears to be essential for maintaining mitochondrial cristae formation and mitochondrial function by acting via YME1L1 in a kinase-independent manner to regulate essential mitochondrial structural proteins OPA1 and IMMT. The action of this enzyme is not yet clear. It is not known if it has protein kinase activity and what type of substrate it would phosphorylate (Ser, Thr or Tyr). The protein is AarF domain-containing protein kinase 1 (ADCK1) of Gallus gallus (Chicken).